A 157-amino-acid chain; its full sequence is Probable succinate transporter subunit YjjB (157 aa).

4 helical membrane-spanning segments follow: residues 6-26 (IILT…GFAM), 51-71 (VLMI…ILVG), 87-107 (VFTV…VAMI), and 129-149 (FLKA…PGLW).

It belongs to the ThrE exporter (TC 2.A.79) family. In terms of assembly, the transporter is composed of YjjB and YjjP.

Its subcellular location is the cell inner membrane. Functionally, involved in succinate export with YjjP. Both proteins are required for export. The polypeptide is Probable succinate transporter subunit YjjB (Proteus mirabilis (strain HI4320)).